The primary structure comprises 61 residues: Copper metallothionein 1-1 (61 aa).

The propeptide occupies 1-8 (MFSELINF). Positions 15, 17, 19, 22, and 28 each coordinate Cu cation. Lys30 is covalently cross-linked (Glycyl lysine isopeptide (Lys-Gly) (interchain with G-Cter in ubiquitin)). Cu cation-binding residues include Cys32, Cys34, Cys38, Cys44, and Cys46. Positions 37 to 61 (GCNSDDKCPCGNKSEETKKSCCSGK) are disordered. The segment covering 40 to 55 (SDDKCPCGNKSEETKK) has biased composition (basic and acidic residues).

This sequence belongs to the metallothionein superfamily. Type 12 family.

Its function is as follows. Protects the cell against copper toxicity by tightly chelating copper ions. May also act as a depository for copper designated for the effective transfer into the apo forms of copper proteins. The sequence is that of Copper metallothionein 1-1 (CUP1-1) from Saccharomyces cerevisiae (strain ATCC 204508 / S288c) (Baker's yeast).